The sequence spans 176 residues: Small ribosomal subunit protein uS5 (176 aa).

In terms of domain architecture, S5 DRBM spans Leu11 to Val74.

This sequence belongs to the universal ribosomal protein uS5 family. Part of the 30S ribosomal subunit. Contacts proteins S4 and S8.

With S4 and S12 plays an important role in translational accuracy. Functionally, located at the back of the 30S subunit body where it stabilizes the conformation of the head with respect to the body. The protein is Small ribosomal subunit protein uS5 of Rickettsia africae (strain ESF-5).